The following is a 349-amino-acid chain: Putative transport protein YhhT (349 aa).

Topologically, residues 1 to 10 (METPQPDKTG) are cytoplasmic. Residues 11–31 (MHILLKLASLVVILAGIHAAA) form a helical membrane-spanning segment. Residue D32 is a topological domain, periplasmic. The helical transmembrane segment at 33-53 (IIVQLLLALFFAIVLNPLVTW) threads the bilayer. The Cytoplasmic portion of the chain corresponds to 54-62 (FIRRGVQRP). A helical transmembrane segment spans residues 63–83 (VAITIVVVVMLIALTALVGVL). Residues 84–142 (AASFNEFISMLPKFNKELTRKLFKLQEMLPFLNLHMSPERMLQRMDSEKVVTFTTALMT) are Periplasmic-facing. Residues 143–163 (GLSGAMASVLLLVMTVVFMLF) form a helical membrane-spanning segment. The Cytoplasmic segment spans residues 164–208 (EVRHVPYKMRFALNNPQIHIAGLHRALKGVSHYLALKTLLSLWTG). Residues 209–229 (VIVWLGLELMGVQFALMWAVL) form a helical membrane-spanning segment. The Periplasmic portion of the chain corresponds to 230–234 (AFLLN). The helical transmembrane segment at 235–255 (YVPNIGAVISAVPPMIQVLLF) threads the bilayer. The Cytoplasmic segment spans residues 256–257 (NG). Residues 258–278 (VYECILVGALFLVVHMVIGNI) traverse the membrane as a helical segment. Topologically, residues 279 to 292 (LEPRMMGHRLGMST) are periplasmic. A helical membrane pass occupies residues 293 to 313 (MVVFLSLLIWGWLLGPVGMLL). Topologically, residues 314–349 (SVPLTSVCKIWMETTKGGSKLAILLGPGRPKSRLPG) are cytoplasmic.

This sequence belongs to the autoinducer-2 exporter (AI-2E) (TC 2.A.86) family.

The protein resides in the cell inner membrane. This is Putative transport protein YhhT (yhhT) from Escherichia coli O157:H7.